The chain runs to 622 residues: Elongation factor 4 (622 aa).

The tr-type G domain occupies 17–201; that stretch reads ALIRNFCIIA…KVVAEVPAPV (185 aa). GTP is bound by residues 29–34 and 148–151; these read DHGKST and NKID.

Belongs to the TRAFAC class translation factor GTPase superfamily. Classic translation factor GTPase family. LepA subfamily.

The protein resides in the cell membrane. It carries out the reaction GTP + H2O = GDP + phosphate + H(+). In terms of biological role, required for accurate and efficient protein synthesis under certain stress conditions. May act as a fidelity factor of the translation reaction, by catalyzing a one-codon backward translocation of tRNAs on improperly translocated ribosomes. Back-translocation proceeds from a post-translocation (POST) complex to a pre-translocation (PRE) complex, thus giving elongation factor G a second chance to translocate the tRNAs correctly. Binds to ribosomes in a GTP-dependent manner. The sequence is that of Elongation factor 4 from Streptomyces avermitilis (strain ATCC 31267 / DSM 46492 / JCM 5070 / NBRC 14893 / NCIMB 12804 / NRRL 8165 / MA-4680).